The primary structure comprises 148 residues: Insoluble matrix shell protein 1 (148 aa).

Residues 105–128 (KSGRTEARNTDDSGDPIIDPRTAD) form a disordered region.

Component of the acid-insoluble organic matrix of the calcified shell.

Its subcellular location is the secreted. The sequence is that of Insoluble matrix shell protein 1 from Ruditapes philippinarum (Japanese carpet shell).